The primary structure comprises 336 residues: Immune-associated nucleotide-binding protein 13 (336 aa).

The AIG1-type G domain occupies 15 to 221 (KPERTLVLLG…YMADLSHELR (207 aa)). The tract at residues 24 to 31 (GRTGNGKS) is G1. GTP contacts are provided by residues 24 to 32 (GRTGNGKSA) and Ser-45. Residues 51 to 55 (FITKE) form a G2 region. The tract at residues 73 to 76 (DTPG) is G3. The tract at residues 143-146 (TNED) is G4. A G5 region spans residues 179–181 (DNS). Asn-180 serves as a coordination point for GTP. Positions 265–328 (KEKISNQLKE…EKETASLRTE (64 aa)) form a coiled coil.

The protein belongs to the TRAFAC class TrmE-Era-EngA-EngB-Septin-like GTPase superfamily. AIG1/Toc34/Toc159-like paraseptin GTPase family. IAN subfamily. Expressed in pollen grains.

The protein is Immune-associated nucleotide-binding protein 13 of Arabidopsis thaliana (Mouse-ear cress).